We begin with the raw amino-acid sequence, 473 residues long: Photosystem II CP43 reaction center protein (473 aa).

Residues 1-14 (MKILYSLRRFYHVE) constitute a propeptide that is removed on maturation. Residue threonine 15 is modified to N-acetylthreonine. Residue threonine 15 is modified to Phosphothreonine. Transmembrane regions (helical) follow at residues 69–93 (LFEV…PHLA), 134–155 (LLGP…KDRN), 178–200 (KALY…RKIT), 255–275 (KPFA…LSYS), and 291–312 (WFNN…ASQA). Position 367 (glutamate 367) interacts with [CaMn4O5] cluster. Residues 447-471 (RARAAAAGFEKGIDRDLEPVLYMTP) form a helical membrane-spanning segment.

Belongs to the PsbB/PsbC family. PsbC subfamily. As to quaternary structure, PSII is composed of 1 copy each of membrane proteins PsbA, PsbB, PsbC, PsbD, PsbE, PsbF, PsbH, PsbI, PsbJ, PsbK, PsbL, PsbM, PsbT, PsbX, PsbY, PsbZ, Psb30/Ycf12, at least 3 peripheral proteins of the oxygen-evolving complex and a large number of cofactors. It forms dimeric complexes. Requires Binds multiple chlorophylls and provides some of the ligands for the Ca-4Mn-5O cluster of the oxygen-evolving complex. It may also provide a ligand for a Cl- that is required for oxygen evolution. PSII binds additional chlorophylls, carotenoids and specific lipids. as cofactor.

Its subcellular location is the plastid. The protein localises to the chloroplast thylakoid membrane. Functionally, one of the components of the core complex of photosystem II (PSII). It binds chlorophyll and helps catalyze the primary light-induced photochemical processes of PSII. PSII is a light-driven water:plastoquinone oxidoreductase, using light energy to abstract electrons from H(2)O, generating O(2) and a proton gradient subsequently used for ATP formation. In Oryza nivara (Indian wild rice), this protein is Photosystem II CP43 reaction center protein.